We begin with the raw amino-acid sequence, 251 residues long: Derlin-1 (251 aa).

N-acetylserine is present on serine 2. Residues 2–15 (SDIGDWFRSIPAIT) are Cytoplasmic-facing. A helical membrane pass occupies residues 16 to 31 (RYWFAATVAVPLIGKL). The Lumenal segment spans residues 32–69 (GIISPAYFFLWPEAFLYRFQIWRPFTATFYFPVGPGTG). The chain crosses the membrane as a helical span at residues 70–89 (FLYLVNLYFLYQYSTRLEAG). Residues 90-94 (AFDGR) are Cytoplasmic-facing. Residues 95–115 (PADYLFMLLFNWICIVITGLA) traverse the membrane as a helical segment. Over 116–122 (MDMQLLM) the chain is Lumenal. Residues 123–137 (IPLIMSVLYVWAQLN) form a helical membrane-spanning segment. The Cytoplasmic portion of the chain corresponds to 138–154 (RDLIVSFWFGTRFKACY). A helical membrane pass occupies residues 155–166 (LPWVILGFNYII). Over 167 to 170 (GGSV) the chain is Lumenal. The helical transmembrane segment at 171–189 (INELIGNLVGHLYFFLMFR) threads the bilayer. At 190-251 (YPMDLGGRNF…WGQGFRLGDQ (62 aa)) the chain is on the cytoplasmic side. Serine 201 is subject to Phosphoserine. Phosphothreonine is present on threonine 202. Phosphoserine is present on serine 226. Residues 229 to 251 (RAADQNGGGGRHNWGQGFRLGDQ) are disordered. Positions 241–248 (NWGQGFRL) match the SHP-box motif.

This sequence belongs to the derlin family. In terms of assembly, homotetramer. The four subunits of the tetramer are arranged in a twofold symmetry. Forms homo- and heterooligomers with DERL2 and DERL3; binding to DERL3 is poorer than that between DERL2 and DERL3. Interacts (via SHP-box motif) with VCP. Interacts with AMFR, SELENOS, SEL1L, SELENOK and SYVN1, as well as with SEL1L-SYVN1 and VCP-SELENOS protein complexes; this interaction is weaker than that observed between DERL2 and these complexes. Interacts with NGLY1 and YOD1. Does not bind to EDEM1. Interacts with DNAJB9. Interacts with RNF103. Interacts with HM13. Interacts with XBP1 isoform 1 (via luminal/ectodomain domain); the interaction obviates the need for ectodomain shedding prior HM13/SPP-mediated XBP1 isoform 1 cleavage. Interacts with the signal recognition particle/SRP and the SRP receptor; in the process of endoplasmic reticulum stress-induced pre-emptive quality control. May interact with UBXN6. Interacts with ZFAND2B; probably through VCP. Interacts with CCDC47. Interacts with C18orf32. May interact with TRAM1. Forms a complex with SVIP and VCP/p97. In terms of tissue distribution, widely expressed, with lowest levels in brain and heart.

Its subcellular location is the endoplasmic reticulum membrane. Functionally, functional component of endoplasmic reticulum-associated degradation (ERAD) for misfolded lumenal proteins. Forms homotetramers which encircle a large channel traversing the endoplasmic reticulum (ER) membrane. This allows the retrotranslocation of misfolded proteins from the ER into the cytosol where they are ubiquitinated and degraded by the proteasome. The channel has a lateral gate within the membrane which provides direct access to membrane proteins with no need to reenter the ER lumen first. May mediate the interaction between VCP and the misfolded protein. Also involved in endoplasmic reticulum stress-induced pre-emptive quality control, a mechanism that selectively attenuates the translocation of newly synthesized proteins into the endoplasmic reticulum and reroutes them to the cytosol for proteasomal degradation. By controlling the steady-state expression of the IGF1R receptor, indirectly regulates the insulin-like growth factor receptor signaling pathway. The chain is Derlin-1 from Mus musculus (Mouse).